A 129-amino-acid chain; its full sequence is Small ribosomal subunit protein uS8 (129 aa).

The protein belongs to the universal ribosomal protein uS8 family. Part of the 30S ribosomal subunit. Contacts proteins S5 and S12.

One of the primary rRNA binding proteins, it binds directly to 16S rRNA central domain where it helps coordinate assembly of the platform of the 30S subunit. This Mesoplasma florum (strain ATCC 33453 / NBRC 100688 / NCTC 11704 / L1) (Acholeplasma florum) protein is Small ribosomal subunit protein uS8.